The sequence spans 298 residues: Probable endonuclease 4 (298 aa).

Positions 69, 111, 146, 180, 183, 215, 228, 230, and 260 each coordinate Zn(2+).

It belongs to the AP endonuclease 2 family. Zn(2+) is required as a cofactor.

It carries out the reaction Endonucleolytic cleavage to 5'-phosphooligonucleotide end-products.. Functionally, endonuclease IV plays a role in DNA repair. It cleaves phosphodiester bonds at apurinic or apyrimidinic (AP) sites, generating a 3'-hydroxyl group and a 5'-terminal sugar phosphate. This Bacillus cytotoxicus (strain DSM 22905 / CIP 110041 / 391-98 / NVH 391-98) protein is Probable endonuclease 4.